A 257-amino-acid polypeptide reads, in one-letter code: Transmembrane protein 101 (257 aa).

The next 8 helical transmembrane spans lie at 21–40 (VLLTRCPFWGCFSQLMLYAE), 52–72 (VPYLYFDMGAAVLCASFMSFG), 77–97 (WFALGAALQLAISTYAAYIGG), 110–130 (YSRTVAIIGGFLVLASGAGEL), 139–159 (SLQSTGQVFLGIYLICVAYSL), 182–202 (LFFVLYGVLALAFLSGYYVTL), 206–226 (ILAVLLPPVMLLIDGNVAYWH), and 233–253 (FWNQMKLLGESVGIFGTAVIL).

Its subcellular location is the membrane. May activate NF-kappa-B signaling pathways. This chain is Transmembrane protein 101 (TMEM101), found in Pongo abelii (Sumatran orangutan).